Here is a 102-residue protein sequence, read N- to C-terminus: Vacuolar ATPase assembly integral membrane protein VMA21 (102 aa).

Residues 1–30 (MERYDKATLNAAFAPEFRQNEGSLTSTLRT) are Cytoplasmic-facing. A helical transmembrane segment spans residues 31-51 (LLFFTALMITLPVGLYFSSKA). At 52 to 66 (YIFEGTLGMSNRDSY) the chain is on the lumenal side. Residues 67 to 87 (FYAAIVAVVTVHVVLAMFVYV) traverse the membrane as a helical segment. Residues 88–102 (AWSEGTRQWREGKQD) lie on the Cytoplasmic side of the membrane.

It belongs to the VMA21 family. As to quaternary structure, associates with the V0 complex of the vacuolar ATPase (V-ATPase). Interacts with ATP6AP2.

The protein localises to the endoplasmic reticulum membrane. It localises to the endoplasmic reticulum-Golgi intermediate compartment membrane. The protein resides in the cytoplasmic vesicle. It is found in the COPII-coated vesicle membrane. Functionally, required for the assembly of the V0 complex of the vacuolar ATPase (V-ATPase) in the endoplasmic reticulum. The chain is Vacuolar ATPase assembly integral membrane protein VMA21 from Gallus gallus (Chicken).